Reading from the N-terminus, the 557-residue chain is Potassium-transporting ATPase potassium-binding subunit (557 aa).

The next 12 membrane-spanning stretches (helical) occupy residues 5-25 (GFLLIATFLLVLMVLARPLGS), 63-83 (LCAILGLNMLGLAVLFFMLLG), 132-152 (GLTVQNFLSAASGIAVIFALI), 170-190 (LLRITLWVLVPVALLIALFFI), 253-273 (FVQMLAIFLIPTALCFAFGEV), 283-303 (LLWAMSVIFVICVGVVMWAEV), 329-349 (VLVSSLFAVVTTAASCGAVIA), 356-376 (ALGGMVPMWLMQIGEVVFGGV), 379-399 (GLYGMMLFVLLAVFIAGLMIG), 416-436 (LTALAILVTPTLVLMGAALAM), 484-504 (LLAFCMFVGRFGVIIPVMAIA), and 526-546 (LFVGLLIGTVLLVGALTFIPA).

It belongs to the KdpA family. In terms of assembly, the system is composed of three essential subunits: KdpA, KdpB and KdpC.

The protein resides in the cell inner membrane. Functionally, part of the high-affinity ATP-driven potassium transport (or Kdp) system, which catalyzes the hydrolysis of ATP coupled with the electrogenic transport of potassium into the cytoplasm. This subunit binds the periplasmic potassium ions and delivers the ions to the membrane domain of KdpB through an intramembrane tunnel. The sequence is that of Potassium-transporting ATPase potassium-binding subunit from Escherichia coli O139:H28 (strain E24377A / ETEC).